The sequence spans 2210 residues: Orsellinic acid synthase ArmB (2210 aa).

Positions 38–261 are N-terminal acylcarrier protein transacylase domain (SAT); that stretch reads LLLDACHYAF…HKTTVDALYH (224 aa). In terms of domain architecture, Ketosynthase family 3 (KS3) spans 391-817; sequence QEPIAICGMS…GSNGALLLEE (427 aa). Active-site for beta-ketoacyl synthase activity residues include cysteine 561, histidine 696, and histidine 736. Residues 915 to 1240 are malonyl-CoA:ACP transacylase (MAT) domain; that stretch reads VFVFSGQGGQ…GLTLSSSLSQ (326 aa). Catalysis depends on serine 1009, which acts as the For acyl/malonyl transferase activity. Residues 1307 to 1437 form an N-terminal hotdog fold region; the sequence is MLQSWAQFPS…GQFRPLLVVD (131 aa). In terms of domain architecture, PKS/mFAS DH spans 1307-1614; it reads MLQSWAQFPS…FKKLRLNTLQ (308 aa). Residues 1336–1611 form a product template (PT) domain region; it reads ITGHIVGDVP…GMCFKKLRLN (276 aa). Residue histidine 1339 is the Proton acceptor; for dehydratase activity of the active site. Positions 1464–1614 are C-terminal hotdog fold; it reads AEVFTTRTAY…FKKLRLNTLQ (151 aa). The active-site Proton donor; for dehydratase activity is aspartate 1525. Residues 1660-1735 enclose the Carrier 1 domain; the sequence is VDVQNTVLNI…ELVREISSTV (76 aa). Residue serine 1694 is modified to O-(pantetheine 4'-phosphoryl)serine. The segment at 1739–1761 is disordered; it reads AATAVNTPETASTPEPTLQGDAS. Residues 1845–1922 enclose the Carrier 2 domain; the sequence is SSPSSDLVDT…AVNQYISSKR (78 aa). Serine 1882 carries the O-(pantetheine 4'-phosphoryl)serine modification. Positions 1920–1946 are disordered; that stretch reads SKRPGKSPKQVEETAMDPDREEDLSDL. Positions 1933–1944 are enriched in acidic residues; it reads TAMDPDREEDLS. The thioesterase (TE) domain stretch occupies residues 1963–2202; it reads VPMSVQKSSS…LGAVTQALVD (240 aa).

It functions in the pathway secondary metabolite biosynthesis. Functionally, non-reducing polyketide synthase, part of the gene cluster that mediates the biosynthesis of melleolides, a range of antifungal and phytotoxic polyketide derivatives composed of an orsellinic acid (OA) moiety esterified to various sesquiterpene alcohols. The first step in melleolides biosynthesis is performed by the delta(6)-protoilludene synthase PRO1 which catalyzes the cyclization of farnesyl diphosphate to protoilludene. The orsellinic acid synthase armB produces OA by condensing acetyl-CoA with 3 malonyl-CoA units in a three-round chain elongation reaction folowed by a C2-C7 ring closure. ArmB further catalyzes the trans-esterification of OA to the various sesquiterpene alcohols resulting from the hydroxylation of protoilludene. The melleolides cluster also includes 5 cytochrome P450 monooxygenases, 4 NAD(+)-dependent oxidoreductases, one flavin-dependent oxidoreductase, and one O-methyltransferase. The cytochrome P450 monooxygenases may be involved in protoilludene hydroxylation to elaborate melleolides with multiple alcohol groups, such as melleolide D, which carries alcohol functionalities at C-4, C-5, C-10, and C-13. The role of the NAD(+)-dependent enzymes remains unknown. Numerous melleolides, including arnamial, show 5'-O-methylation of the aromatic moiety which may be catalyzed by the methyltransferase encoded in the cluster. The flavin-dependent oxidoreductase might represent the dehydrogenase yielding the aldehyde in position 1 of arnamial and other melleolides. Finally, several halogenase localized outside of the cluster (armH1 to armH5), are able to catalyze the transfer of a single chlorine atom to the melleolide backbone, resulting in a 6'-chloromelleolide product. This Armillaria ostoyae (Armillaria root rot fungus) protein is Orsellinic acid synthase ArmB.